A 250-amino-acid chain; its full sequence is Agamous-like MADS-box protein AGL8 homolog (250 aa).

Residues 3–57 (RGRVQLKRIENKINRQVTFSKRRSGLLKKAHEISVLCDAEVGLIVFSTKGKLFEY) form the MADS-box domain. A K-box domain is found at 88–178 (PGSWTLEHAK…SKKVKEREKE (91 aa)).

As to expression, abundant in vegetative organs.

It localises to the nucleus. Probable transcription factor. The protein is Agamous-like MADS-box protein AGL8 homolog of Solanum tuberosum (Potato).